We begin with the raw amino-acid sequence, 116 residues long: Large ribosomal subunit protein bL20 (116 aa).

Belongs to the bacterial ribosomal protein bL20 family.

Its function is as follows. Binds directly to 23S ribosomal RNA and is necessary for the in vitro assembly process of the 50S ribosomal subunit. It is not involved in the protein synthesizing functions of that subunit. The polypeptide is Large ribosomal subunit protein bL20 (rplT) (Helicobacter pylori (strain ATCC 700392 / 26695) (Campylobacter pylori)).